A 307-amino-acid chain; its full sequence is UDP-N-acetylenolpyruvoylglucosamine reductase (307 aa).

The FAD-binding PCMH-type domain occupies 34 to 197 (VGGNAEALFR…LSASLKGRPG (164 aa)). The active site involves Arg177. The active-site Proton donor is the Ser226. Residue Glu296 is part of the active site.

This sequence belongs to the MurB family. FAD serves as cofactor.

It localises to the cytoplasm. The catalysed reaction is UDP-N-acetyl-alpha-D-muramate + NADP(+) = UDP-N-acetyl-3-O-(1-carboxyvinyl)-alpha-D-glucosamine + NADPH + H(+). Its pathway is cell wall biogenesis; peptidoglycan biosynthesis. In terms of biological role, cell wall formation. The protein is UDP-N-acetylenolpyruvoylglucosamine reductase of Paramagnetospirillum magneticum (strain ATCC 700264 / AMB-1) (Magnetospirillum magneticum).